Consider the following 173-residue polypeptide: Copper transport protein ctr5 (173 aa).

The Extracellular segment spans residues 1–54 (MSLSKMSMSGMSGMGMGSSSNSSAATCRMSMLWNWYIHDSCFLAKSWHINTGNK). The chain crosses the membrane as a helical span at residues 55–75 (FAGSIIGIFFFAVAIEGLSLV). At 76 to 135 (QRMFDRWIVAHSNGKTLSGPLRIFFPSSTVHVTVWQQLIRAAMYSSFYLSATILMLIVMS) the chain is on the cytoplasmic side. The helical transmembrane segment at 136-156 (FNGYAILFGFVGAWIGFFLFA) threads the bilayer. Over 157–173 (SDTYGTPSTGTGCCESR) the chain is Extracellular.

The protein belongs to the copper transporter (Ctr) (TC 1.A.56) family. SLC31A subfamily. As to quaternary structure, interacts with ctr4.

It is found in the membrane. Its function is as follows. Required for high affinity copper (probably reduced Cu I) transport into the cell. This Schizosaccharomyces pombe (strain 972 / ATCC 24843) (Fission yeast) protein is Copper transport protein ctr5 (ctr5).